The sequence spans 358 residues: Methylthioribose-1-phosphate isomerase (358 aa).

The residue at position 1 (methionine 1) is an N-acetylmethionine. Aspartate 248 acts as the Proton donor in catalysis.

The protein belongs to the eIF-2B alpha/beta/delta subunits family. MtnA subfamily.

It localises to the cytoplasm. The protein localises to the nucleus. It catalyses the reaction 5-(methylsulfanyl)-alpha-D-ribose 1-phosphate = 5-(methylsulfanyl)-D-ribulose 1-phosphate. Its pathway is amino-acid biosynthesis; L-methionine biosynthesis via salvage pathway; L-methionine from S-methyl-5-thio-alpha-D-ribose 1-phosphate: step 1/6. Functionally, catalyzes the interconversion of methylthioribose-1-phosphate (MTR-1-P) into methylthioribulose-1-phosphate (MTRu-1-P). This Bos taurus (Bovine) protein is Methylthioribose-1-phosphate isomerase.